Reading from the N-terminus, the 255-residue chain is 5'-nucleotidase SurE (255 aa).

The a divalent metal cation site is built by Asp-8, Asp-9, Ser-39, and Asn-95.

This sequence belongs to the SurE nucleotidase family. It depends on a divalent metal cation as a cofactor.

The protein resides in the cytoplasm. It catalyses the reaction a ribonucleoside 5'-phosphate + H2O = a ribonucleoside + phosphate. Its function is as follows. Nucleotidase that shows phosphatase activity on nucleoside 5'-monophosphates. The sequence is that of 5'-nucleotidase SurE from Rubrivivax gelatinosus (strain NBRC 100245 / IL144).